The sequence spans 459 residues: tRNA-guanine(15) transglycosylase (459 aa).

Asp90 serves as the catalytic Nucleophile. 2 residues coordinate substrate: Asp125 and Gly192. The Zn(2+) site is built by Cys275, Cys277, and Cys280.

Belongs to the archaeosine tRNA-ribosyltransferase family. It depends on Zn(2+) as a cofactor.

The catalysed reaction is guanosine(15) in tRNA + 7-cyano-7-deazaguanine = 7-cyano-7-carbaguanosine(15) in tRNA + guanine. Its pathway is tRNA modification; archaeosine-tRNA biosynthesis. In terms of biological role, exchanges the guanine residue with 7-cyano-7-deazaguanine (preQ0) at position 15 in the dihydrouridine loop (D-loop) of archaeal tRNAs. In Methanopyrus kandleri (strain AV19 / DSM 6324 / JCM 9639 / NBRC 100938), this protein is tRNA-guanine(15) transglycosylase.